Reading from the N-terminus, the 254-residue chain is Protein odd-skipped-related 2 (254 aa).

C2H2-type zinc fingers lie at residues 124-146 (FICKYCDRHFTKSYNLLIHERTH), 152-174 (YSCDVCGKAFRRQDHLRDHKYIH), and 180-202 (FKCEICGKGFCQSRTLLVHRATH).

Belongs to the Odd C2H2-type zinc-finger protein family.

The protein resides in the nucleus. Its function is as follows. May function as transcription regulator. Required for morphogenesis and function of the digestive tract. In Caenorhabditis elegans, this protein is Protein odd-skipped-related 2.